The primary structure comprises 122 residues: Glycine cleavage system H protein (122 aa).

A Lipoyl-binding domain is found at 19 to 101 (VVTVGITNYA…EKEGWLWKMT (83 aa)). An N6-lipoyllysine modification is found at Lys60.

Belongs to the GcvH family. The glycine cleavage system is composed of four proteins: P, T, L and H. (R)-lipoate serves as cofactor.

In terms of biological role, the glycine cleavage system catalyzes the degradation of glycine. The H protein shuttles the methylamine group of glycine from the P protein to the T protein. This Bartonella quintana (strain Toulouse) (Rochalimaea quintana) protein is Glycine cleavage system H protein.